The primary structure comprises 380 residues: MSSKWFNAIHLLVCPLTVLVGYLMNAYGYGAALQATLNKDGLVNAMLVKKGWFWTSLVGWWCIIRYRAVPGATGRDRRHIVQSFKRYAILTVWWYVFTQGIWFGVGPIMDLVFVYTGGHCHYDVFDDAGHVNEDFQGSVTRTNRALALIHNVLTLHGHHQEHRQQQLWDRSIGSIQGALQATQPKTPKNVTASAAAAINTFIHDQMHRWQGPLTTSAQCRRFGGHWAGGHDPSGHVFLATLMCMFLLGELRVFGRRALAHLYAQKWQLVRLVTRLFDTGPLWTWRRCGGGSMTCGARLWRAIVEPPVTCAAALLRLTRCIACDHPVIILLTLLVTWLWQLLLTAVASRFHTVREHMSGLLAAYIVTGLVYARDAAALRPV.

Over methionine 1 to asparagine 7 the chain is Cytoplasmic. The helical transmembrane segment at alanine 8 to glycine 28 threads the bilayer. The Lumenal segment spans residues tyrosine 29–valine 43. Residues asparagine 44–isoleucine 64 traverse the membrane as a helical segment. Over arginine 65–alanine 88 the chain is Cytoplasmic. The helical transmembrane segment at isoleucine 89–methionine 109 threads the bilayer. Residues aspartate 110 to serine 233 lie on the Lumenal side of the membrane. The chain crosses the membrane as a helical span at residues glycine 234 to glycine 254. Residue histidine 235 is part of the active site. Residues arginine 255–proline 325 lie on the Cytoplasmic side of the membrane. The chain crosses the membrane as a helical span at residues valine 326–alanine 346. Residues serine 347–methionine 356 lie on the Lumenal side of the membrane. Residue histidine 350 is part of the active site. A helical transmembrane segment spans residues serine 357–leucine 377. Residues arginine 378–valine 380 are Cytoplasmic-facing.

Belongs to the FIT family. Fungal FIT2B/SCS3 subfamily.

It is found in the endoplasmic reticulum membrane. The catalysed reaction is an acyl-CoA + H2O = an acyl-4'-phosphopantetheine + adenosine 3',5'-bisphosphate + 2 H(+). It carries out the reaction (9Z)-octadecenoyl-CoA + H2O = S-(9Z-octadecenoyl)-4'-phosphopantetheine + adenosine 3',5'-bisphosphate + 2 H(+). The enzyme catalyses (5Z,8Z,11Z,14Z)-eicosatetraenoyl-CoA + H2O = S-(5Z,8Z,11Z,14Z-eicosatetraenoyl)-4'-phosphopantetheine + adenosine 3',5'-bisphosphate + 2 H(+). It catalyses the reaction hexadecanoyl-CoA + H2O = S-hexadecanoyl-4'-phosphopantetheine + adenosine 3',5'-bisphosphate + 2 H(+). Its function is as follows. Fatty acyl-coenzyme A (CoA) diphosphatase that hydrolyzes fatty acyl-CoA to yield acyl-4'-phosphopantetheine and adenosine 3',5'-bisphosphate. Preferentially hydrolyzes unsaturated long-chain acyl-CoA substrates in the endoplasmic reticulum (ER) lumen. This catalytic activity is required for maintaining ER structure and for lipid droplets (LDs) biogenesis, which are lipid storage organelles involved in maintaining lipid and energy homeostasis. May directly bind to diacylglycerol (DAGs) and triacylglycerol, which is also important for LD biogenesis. May support directional budding of nacent LDs from the ER into the cytosol by reducing DAG levels at sites of LD formation. May play a role in the regulation of cell morphology and cytoskeletal organization. Involved in phospholipid biosynthesis. In Saccharomyces cerevisiae (strain ATCC 204508 / S288c) (Baker's yeast), this protein is Acyl-coenzyme A diphosphatase SCS3.